The following is a 234-amino-acid chain: Leucyl/phenylalanyl-tRNA--protein transferase (234 aa).

Belongs to the L/F-transferase family.

The protein resides in the cytoplasm. It catalyses the reaction N-terminal L-lysyl-[protein] + L-leucyl-tRNA(Leu) = N-terminal L-leucyl-L-lysyl-[protein] + tRNA(Leu) + H(+). It carries out the reaction N-terminal L-arginyl-[protein] + L-leucyl-tRNA(Leu) = N-terminal L-leucyl-L-arginyl-[protein] + tRNA(Leu) + H(+). The enzyme catalyses L-phenylalanyl-tRNA(Phe) + an N-terminal L-alpha-aminoacyl-[protein] = an N-terminal L-phenylalanyl-L-alpha-aminoacyl-[protein] + tRNA(Phe). Functionally, functions in the N-end rule pathway of protein degradation where it conjugates Leu, Phe and, less efficiently, Met from aminoacyl-tRNAs to the N-termini of proteins containing an N-terminal arginine or lysine. The protein is Leucyl/phenylalanyl-tRNA--protein transferase of Escherichia coli O45:K1 (strain S88 / ExPEC).